The sequence spans 265 residues: MVPRDRVNAAAAGGGGEGRLVQSGIVNKKCDKKAPKRIHKSEREKLKRDKQNDLFNELGNLLEPDRQNNGKACVLGETTRILKDLLSQVESLRKENSSLKNESHYVALERNELHDDNSMLRTEILELQNELRTRMEGNPVWSHVNTRPALRVPYPTTGVFPVQHLPHLPVTTTAAFPQQLPVIIEQHYAATPRELQLFPESATSEDSEPSQEHGISDHVTRPQPRYPTPTATLPVNLFPVFPGRQDQQCSSGTSGTNEEDRIGRS.

Positions 1 to 26 (MVPRDRVNAAAAGGGGEGRLVQSGIV) are disordered. The tract at residues 35–48 (PKRIHKSEREKLKR) is basic motif; degenerate. Residues 35–85 (PKRIHKSEREKLKRDKQNDLFNELGNLLEPDRQNNGKACVLGETTRILKDL) form the bHLH domain. The segment at 49 to 85 (DKQNDLFNELGNLLEPDRQNNGKACVLGETTRILKDL) is helix-loop-helix motif. Positions 75–130 (LGETTRILKDLLSQVESLRKENSSLKNESHYVALERNELHDDNSMLRTEILELQNE) form a coiled coil. The interval 200 to 265 (ESATSEDSEP…TNEEDRIGRS (66 aa)) is disordered. Residues 210–220 (SQEHGISDHVT) are compositionally biased toward basic and acidic residues. Residues 245 to 256 (QDQQCSSGTSGT) are compositionally biased toward polar residues.

Belongs to the bHLH protein family. Interacts with TIFY11A/JAZ9.

It is found in the nucleus. Its function is as follows. Transcription factor that plays a positive role in salt stress tolerance. Interacts with TIFY11A/JAZ9 and binds to the promoter of some potassium ion transporter genes to regulate potassium homeostasis during salt stress. The polypeptide is Transcription factor BHLH062 (Oryza sativa subsp. japonica (Rice)).